The primary structure comprises 253 residues: Adenosylcobinamide-GDP ribazoletransferase (253 aa).

The next 4 helical transmembrane spans lie at 33–53 (ISPI…YLIL), 106–126 (VGSG…VALL), 132–152 (LYTI…SLYI), and 178–198 (ILLL…FIIF).

This sequence belongs to the CobS family. Requires Mg(2+) as cofactor.

The protein localises to the cell membrane. It catalyses the reaction alpha-ribazole + adenosylcob(III)inamide-GDP = adenosylcob(III)alamin + GMP + H(+). The enzyme catalyses alpha-ribazole 5'-phosphate + adenosylcob(III)inamide-GDP = adenosylcob(III)alamin 5'-phosphate + GMP + H(+). It participates in cofactor biosynthesis; adenosylcobalamin biosynthesis; adenosylcobalamin from cob(II)yrinate a,c-diamide: step 7/7. Functionally, joins adenosylcobinamide-GDP and alpha-ribazole to generate adenosylcobalamin (Ado-cobalamin). Also synthesizes adenosylcobalamin 5'-phosphate from adenosylcobinamide-GDP and alpha-ribazole 5'-phosphate. The chain is Adenosylcobinamide-GDP ribazoletransferase from Saccharolobus solfataricus (strain ATCC 35092 / DSM 1617 / JCM 11322 / P2) (Sulfolobus solfataricus).